The sequence spans 230 residues: Large ribosomal subunit protein uL1 (230 aa).

This sequence belongs to the universal ribosomal protein uL1 family. In terms of assembly, part of the 50S ribosomal subunit.

In terms of biological role, binds directly to 23S rRNA. The L1 stalk is quite mobile in the ribosome, and is involved in E site tRNA release. Functionally, protein L1 is also a translational repressor protein, it controls the translation of the L11 operon by binding to its mRNA. The chain is Large ribosomal subunit protein uL1 from Leptospira biflexa serovar Patoc (strain Patoc 1 / Ames).